The chain runs to 122 residues: UPF0344 protein BcerKBAB4_1054 (122 aa).

Transmembrane regions (helical) follow at residues 6–26 (ITAW…YSAG), 38–58 (LMYI…VKTA), 65–85 (WYGM…MVLV), and 92–112 (PTGA…YLGL).

It belongs to the UPF0344 family.

Its subcellular location is the cell membrane. This Bacillus mycoides (strain KBAB4) (Bacillus weihenstephanensis) protein is UPF0344 protein BcerKBAB4_1054.